The sequence spans 113 residues: Large ribosomal subunit protein eL31 (113 aa).

It belongs to the eukaryotic ribosomal protein eL31 family.

The protein is Large ribosomal subunit protein eL31 (RPL31) of Candida glabrata (strain ATCC 2001 / BCRC 20586 / JCM 3761 / NBRC 0622 / NRRL Y-65 / CBS 138) (Yeast).